Consider the following 107-residue polypeptide: Large ribosomal subunit protein uL24 (107 aa).

This sequence belongs to the universal ribosomal protein uL24 family. As to quaternary structure, part of the 50S ribosomal subunit.

In terms of biological role, one of two assembly initiator proteins, it binds directly to the 5'-end of the 23S rRNA, where it nucleates assembly of the 50S subunit. One of the proteins that surrounds the polypeptide exit tunnel on the outside of the subunit. In Streptomyces avermitilis (strain ATCC 31267 / DSM 46492 / JCM 5070 / NBRC 14893 / NCIMB 12804 / NRRL 8165 / MA-4680), this protein is Large ribosomal subunit protein uL24.